We begin with the raw amino-acid sequence, 445 residues long: Trigger factor (445 aa).

The PPIase FKBP-type domain maps to 162–247 (GDQVTIDAIG…IKAVHTAEPT (86 aa)).

This sequence belongs to the FKBP-type PPIase family. Tig subfamily.

It is found in the cytoplasm. It catalyses the reaction [protein]-peptidylproline (omega=180) = [protein]-peptidylproline (omega=0). Involved in protein export. Acts as a chaperone by maintaining the newly synthesized protein in an open conformation. Functions as a peptidyl-prolyl cis-trans isomerase. This is Trigger factor from Rickettsia africae (strain ESF-5).